The following is a 165-amino-acid chain: Protein SprT (165 aa).

Residues 19–163 (REKLAQANLK…RCVKCGEPLV (145 aa)) enclose the SprT-like domain. Histidine 78 contributes to the Zn(2+) binding site. Glutamate 79 is a catalytic residue. Histidine 82 lines the Zn(2+) pocket.

This sequence belongs to the SprT family. Zn(2+) serves as cofactor.

It localises to the cytoplasm. The polypeptide is Protein SprT (Enterobacter sp. (strain 638)).